The chain runs to 290 residues: Arginine N-acetyltransferase avaD (290 aa).

157 to 163 (NQAHFEA) contributes to the acetyl-CoA binding site.

Belongs to the acetyltransferase family. GCN5 subfamily.

Its pathway is secondary metabolite metabolism. In terms of biological role, arginine N-acetyltransferase; part of the cluster that mediates the biosynthesis of a highly modified cyclo-arginine-tryptophan dipeptide (cRW). Within the pathway, avaD catalyzes the N-acetylation of the guanidine group. The first step of the pathway is perfornmed by the arginine-containing cyclodipeptide synthase (RCPDS) avaA that acts as the scaffold-generating enzyme and is responsible for formation of the cyclo-Arg-Trp (cRW) diketopiperazine. AvaB then acts as a multifunctional flavoenzyme that is responsible for generating the cyclo-Arg-formylkynurenine DKP, which can be deformylated by avaC. AvaB then further catalyzes an additional N-oxidation followed by cyclization and dehydration. The next step is an N-acetylation of the guanidine group catalyzed by the arginine N-acetyltransferase avaD. The roles of the additional enzymes identified within the ava cluster still have to be determined. This Aspergillus versicolor protein is Arginine N-acetyltransferase avaD.